Here is a 380-residue protein sequence, read N- to C-terminus: Tryptophan 2,3-dioxygenase (380 aa).

Substrate contacts are provided by residues 57–61 and arginine 128; that span reads FIITH. Residue histidine 313 coordinates heme. A substrate-binding site is contributed by threonine 328.

It belongs to the tryptophan 2,3-dioxygenase family. In terms of assembly, homotetramer. Dimer of dimers. Requires heme as cofactor.

The catalysed reaction is L-tryptophan + O2 = N-formyl-L-kynurenine. The protein operates within amino-acid degradation; L-tryptophan degradation via kynurenine pathway; L-kynurenine from L-tryptophan: step 1/2. Its pathway is pigment biosynthesis; ommochrome biosynthesis. Its function is as follows. Heme-dependent dioxygenase that catalyzes the oxidative cleavage of the L-tryptophan (L-Trp) pyrrole ring and converts L-tryptophan to N-formyl-L-kynurenine. Catalyzes the oxidative cleavage of the indole moiety. This is Tryptophan 2,3-dioxygenase from Drosophila virilis (Fruit fly).